Consider the following 639-residue polypeptide: Protein phosphatase EYA4 (639 aa).

Methionine 1 is subject to N-acetylmethionine. 3 disordered regions span residues 1 to 72 (MEDS…GGEN), 210 to 232 (QTQS…PQPG), and 300 to 368 (ADGT…DSDL). A Glycyl lysine isopeptide (Lys-Gly) (interchain with G-Cter in SUMO2) cross-link involves residue lysine 14. The span at 18–30 (ESDVSQSQNSRSM) shows a compositional bias: polar residues. Lysine 52 is covalently cross-linked (Glycyl lysine isopeptide (Lys-Gly) (interchain with G-Cter in SUMO2)). Residues 56-66 (SNLSSTSVTTN) show a composition bias toward low complexity. Positions 300–334 (ADGTPSSTSTYQLQESLPGLTNQPGEFDTMQSPST) are enriched in polar residues. Position 361 is a phosphoserine (serine 361). Catalysis depends on aspartate 375, which acts as the Nucleophile. Mg(2+)-binding residues include aspartate 375, aspartate 377, and aspartate 603. Aspartate 377 serves as the catalytic Proton donor.

The protein belongs to the HAD-like hydrolase superfamily. EYA family. Interacts with SIX3; translocates EYA4 from the cytoplasm to the nucleus and promotes activation of their target genes. It depends on Mg(2+) as a cofactor. As to expression, highly expressed in heart and skeletal muscle.

It is found in the cytoplasm. Its subcellular location is the nucleus. The enzyme catalyses O-phospho-L-tyrosyl-[protein] + H2O = L-tyrosyl-[protein] + phosphate. In terms of biological role, tyrosine phosphatase that specifically dephosphorylates 'Tyr-142' of histone H2AX (H2AXY142ph). 'Tyr-142' phosphorylation of histone H2AX plays a central role in DNA repair and acts as a mark that distinguishes between apoptotic and repair responses to genotoxic stress. Promotes efficient DNA repair by dephosphorylating H2AX, promoting the recruitment of DNA repair complexes containing MDC1. Its function as histone phosphatase probably explains its role in transcription regulation during organogenesis. May be involved in development of the eye. This chain is Protein phosphatase EYA4 (EYA4), found in Homo sapiens (Human).